Reading from the N-terminus, the 408-residue chain is NADH-quinone oxidoreductase subunit D (408 aa).

The protein belongs to the complex I 49 kDa subunit family. In terms of assembly, NDH-1 is composed of 14 different subunits. Subunits NuoB, C, D, E, F, and G constitute the peripheral sector of the complex.

The protein resides in the cell inner membrane. It carries out the reaction a quinone + NADH + 5 H(+)(in) = a quinol + NAD(+) + 4 H(+)(out). Functionally, NDH-1 shuttles electrons from NADH, via FMN and iron-sulfur (Fe-S) centers, to quinones in the respiratory chain. The immediate electron acceptor for the enzyme in this species is believed to be ubiquinone. Couples the redox reaction to proton translocation (for every two electrons transferred, four hydrogen ions are translocated across the cytoplasmic membrane), and thus conserves the redox energy in a proton gradient. The chain is NADH-quinone oxidoreductase subunit D from Campylobacter jejuni subsp. jejuni serotype O:6 (strain 81116 / NCTC 11828).